Reading from the N-terminus, the 154-residue chain is Melatonin receptor type 1A (154 aa).

The Cytoplasmic portion of the chain corresponds to 1 to 19 (YCYICHSLKYDRWYSNRNS). Residues 20–40 (LCCVFLICVLTLVAIVPNLCM) traverse the membrane as a helical segment. The Extracellular segment spans residues 41 to 62 (GTLQYDPRIYSCTFAQSVSSAY). The chain crosses the membrane as a helical span at residues 63–83 (TIAVVVFHFLVPMVIVIFRYL). Residues 84-115 (RIWVLVLQIRWRAKPENNPRLKPQDFRNFVTM) lie on the Cytoplasmic side of the membrane. A helical transmembrane segment spans residues 116 to 136 (FVVFVLFAICWAPLNFIGLAV). Topologically, residues 137-149 (ASDPASMAPRIPE) are extracellular.

The protein belongs to the G-protein coupled receptor 1 family.

The protein resides in the cell membrane. Functionally, high affinity receptor for melatonin. Likely to mediate the reproductive and circadian actions of melatonin. The activity of this receptor is mediated by pertussis toxin sensitive G proteins that inhibit adenylate cyclase activity. The polypeptide is Melatonin receptor type 1A (MTNR1A) (Sus scrofa (Pig)).